The primary structure comprises 274 residues: Carbonic anhydrase (274 aa).

Cys39, His98, and Cys101 together coordinate Zn(2+). The disordered stretch occupies residues 214–274 (EDEYAPHPNS…QAERIYRGSR (61 aa)). Basic and acidic residues-rich tracts occupy residues 234–245 (PGKERPGREKAT) and 261–274 (LPRE…RGSR).

The protein belongs to the beta-class carbonic anhydrase family. A hexamer formed by a trimer of dimers. Interacts with the first 260 residues of CcmM; both the N-terminal 206 residues and the C-terminal tail contribute to CcmM binding. Interacts with full-length and the N-terminal 249 residues of CcmM. A probable CcmM-CcaA-CcmN complex as well as a CcaA-RuBisCO-CcmM complex can also be isolated. Zn(2+) serves as cofactor.

It is found in the carboxysome. It carries out the reaction hydrogencarbonate + H(+) = CO2 + H2O. With respect to regulation, inhibited by ethoxyzolamide. Functionally, reversible hydration of carbon dioxide. Essential to photosynthetic carbon dioxide fixation, supplies CO(2) to RuBisCO (ribulose bisphosphate carboxylase, rbcL-rbcS) in the carboxysome. This chain is Carbonic anhydrase, found in Synechocystis sp. (strain ATCC 27184 / PCC 6803 / Kazusa).